A 298-amino-acid polypeptide reads, in one-letter code: Tyrosine recombinase XerC (298 aa).

Residues 1 to 84 (MNHIQEAFLN…TLRTFYEYWM (84 aa)) form the Core-binding (CB) domain. The 182-residue stretch at 105–286 (YLPQFFYEEE…SNQQLRKVYL (182 aa)) folds into the Tyr recombinase domain. Residues Arg-145, Lys-169, His-238, Arg-241, and His-264 contribute to the active site. Tyr-273 acts as the O-(3'-phospho-DNA)-tyrosine intermediate in catalysis.

This sequence belongs to the 'phage' integrase family. XerC subfamily. In terms of assembly, forms a cyclic heterotetrameric complex composed of two molecules of XerC and two molecules of XerD.

The protein localises to the cytoplasm. Its function is as follows. Site-specific tyrosine recombinase, which acts by catalyzing the cutting and rejoining of the recombining DNA molecules. The XerC-XerD complex is essential to convert dimers of the bacterial chromosome into monomers to permit their segregation at cell division. It also contributes to the segregational stability of plasmids. In Staphylococcus aureus (strain MSSA476), this protein is Tyrosine recombinase XerC.